We begin with the raw amino-acid sequence, 300 residues long: uncharacterized protein (300 aa).

The segment at 230-251 (LRQSTSRQSISRQSISRQSTSR) is disordered. Over residues 231–251 (RQSTSRQSISRQSISRQSTSR) the composition is skewed to low complexity.

This is an uncharacterized protein from Acanthamoeba polyphaga (Amoeba).